A 212-amino-acid polypeptide reads, in one-letter code: Large ribosomal subunit protein uL3 (212 aa).

The residue at position 153 (Gln-153) is an N5-methylglutamine.

It belongs to the universal ribosomal protein uL3 family. As to quaternary structure, part of the 50S ribosomal subunit. Forms a cluster with proteins L14 and L19. In terms of processing, methylated by PrmB.

One of the primary rRNA binding proteins, it binds directly near the 3'-end of the 23S rRNA, where it nucleates assembly of the 50S subunit. This is Large ribosomal subunit protein uL3 from Shewanella denitrificans (strain OS217 / ATCC BAA-1090 / DSM 15013).